Reading from the N-terminus, the 156-residue chain is Arginine repressor (156 aa).

This sequence belongs to the ArgR family.

It localises to the cytoplasm. The protein operates within amino-acid biosynthesis; L-arginine biosynthesis [regulation]. Its function is as follows. Regulates arginine biosynthesis genes. The sequence is that of Arginine repressor from Yersinia pseudotuberculosis serotype I (strain IP32953).